Reading from the N-terminus, the 285-residue chain is HTH-type transcriptional regulator MurR (285 aa).

One can recognise an HTH rpiR-type domain in the interval 1–77 (MLYLTKIRNA…MALIGEYSAS (77 aa)). Positions 37–56 (SRKMAKQLGISQSSIVKFAQ) form a DNA-binding region, H-T-H motif. Residues 128–268 (IIEVISKAPF…FVGLVQLNDV (141 aa)) form the SIS domain.

Homotetramer.

Its pathway is amino-sugar metabolism; N-acetylmuramate degradation [regulation]. Its function is as follows. Represses the expression of the murPQ operon involved in the uptake and degradation of N-acetylmuramic acid (MurNAc). Binds to two adjacent inverted repeats within the operator region. MurNAc 6-phosphate, the substrate of MurQ, is the specific inducer that weakens binding of MurR to the operator. The protein is HTH-type transcriptional regulator MurR of Escherichia coli O157:H7.